Here is a 366-residue protein sequence, read N- to C-terminus: 3-dehydroquinate synthase (366 aa).

Residues 71 to 76 (DGEQYK), 105 to 109 (GVIGD), 129 to 130 (TT), K142, K151, and 169 to 172 (CLQT) contribute to the NAD(+) site. 3 residues coordinate Zn(2+): E184, H248, and H265.

This sequence belongs to the sugar phosphate cyclases superfamily. Dehydroquinate synthase family. NAD(+) is required as a cofactor. It depends on Co(2+) as a cofactor. Requires Zn(2+) as cofactor.

The protein resides in the cytoplasm. The catalysed reaction is 7-phospho-2-dehydro-3-deoxy-D-arabino-heptonate = 3-dehydroquinate + phosphate. It functions in the pathway metabolic intermediate biosynthesis; chorismate biosynthesis; chorismate from D-erythrose 4-phosphate and phosphoenolpyruvate: step 2/7. Functionally, catalyzes the conversion of 3-deoxy-D-arabino-heptulosonate 7-phosphate (DAHP) to dehydroquinate (DHQ). This chain is 3-dehydroquinate synthase, found in Photorhabdus laumondii subsp. laumondii (strain DSM 15139 / CIP 105565 / TT01) (Photorhabdus luminescens subsp. laumondii).